The primary structure comprises 125 residues: Small ribosomal subunit protein uS12 (125 aa).

The residue at position 89 (Asp-89) is a 3-methylthioaspartic acid.

This sequence belongs to the universal ribosomal protein uS12 family. In terms of assembly, part of the 30S ribosomal subunit. Contacts proteins S8 and S17. May interact with IF1 in the 30S initiation complex.

Its function is as follows. With S4 and S5 plays an important role in translational accuracy. In terms of biological role, interacts with and stabilizes bases of the 16S rRNA that are involved in tRNA selection in the A site and with the mRNA backbone. Located at the interface of the 30S and 50S subunits, it traverses the body of the 30S subunit contacting proteins on the other side and probably holding the rRNA structure together. The combined cluster of proteins S8, S12 and S17 appears to hold together the shoulder and platform of the 30S subunit. The protein is Small ribosomal subunit protein uS12 of Ralstonia nicotianae (strain ATCC BAA-1114 / GMI1000) (Ralstonia solanacearum).